Here is a 216-residue protein sequence, read N- to C-terminus: 2-phospho-L-lactate guanylyltransferase (216 aa).

Belongs to the CofC family. As to quaternary structure, homodimer.

The enzyme catalyses (2S)-2-phospholactate + GTP + H(+) = (2S)-lactyl-2-diphospho-5'-guanosine + diphosphate. The protein operates within cofactor biosynthesis; coenzyme F420 biosynthesis. Its function is as follows. Guanylyltransferase that catalyzes the activation of (2S)-2-phospholactate (2-PL) as (2S)-lactyl-2-diphospho-5'-guanosine, via the condensation of 2-PL with GTP. It is involved in the biosynthesis of coenzyme F420, a hydride carrier cofactor. The chain is 2-phospho-L-lactate guanylyltransferase from Methanocaldococcus infernus (strain DSM 11812 / JCM 15783 / ME).